We begin with the raw amino-acid sequence, 762 residues long: Phosphoribosylformylglycinamidine synthase subunit PurL (762 aa).

The active site involves His-58. ATP-binding residues include Tyr-61 and Arg-105. Mg(2+) is bound at residue Glu-107. Substrate-binding positions include 108–111 (SHNH) and Arg-130. The Proton acceptor role is filled by His-109. Asp-131 lines the Mg(2+) pocket. A substrate-binding site is contributed by Gln-255. Residue Asp-283 participates in Mg(2+) binding. 327-329 (ESQ) serves as a coordination point for substrate. ATP contacts are provided by Asn-513 and Gly-550. Residue Asn-551 coordinates Mg(2+). Ser-553 contributes to the substrate binding site.

This sequence belongs to the FGAMS family. In terms of assembly, monomer. Part of the FGAM synthase complex composed of 1 PurL, 1 PurQ and 2 PurS subunits.

It is found in the cytoplasm. It catalyses the reaction N(2)-formyl-N(1)-(5-phospho-beta-D-ribosyl)glycinamide + L-glutamine + ATP + H2O = 2-formamido-N(1)-(5-O-phospho-beta-D-ribosyl)acetamidine + L-glutamate + ADP + phosphate + H(+). It functions in the pathway purine metabolism; IMP biosynthesis via de novo pathway; 5-amino-1-(5-phospho-D-ribosyl)imidazole from N(2)-formyl-N(1)-(5-phospho-D-ribosyl)glycinamide: step 1/2. Its function is as follows. Part of the phosphoribosylformylglycinamidine synthase complex involved in the purines biosynthetic pathway. Catalyzes the ATP-dependent conversion of formylglycinamide ribonucleotide (FGAR) and glutamine to yield formylglycinamidine ribonucleotide (FGAM) and glutamate. The FGAM synthase complex is composed of three subunits. PurQ produces an ammonia molecule by converting glutamine to glutamate. PurL transfers the ammonia molecule to FGAR to form FGAM in an ATP-dependent manner. PurS interacts with PurQ and PurL and is thought to assist in the transfer of the ammonia molecule from PurQ to PurL. The sequence is that of Phosphoribosylformylglycinamidine synthase subunit PurL from Corynebacterium glutamicum (strain ATCC 13032 / DSM 20300 / JCM 1318 / BCRC 11384 / CCUG 27702 / LMG 3730 / NBRC 12168 / NCIMB 10025 / NRRL B-2784 / 534).